Consider the following 365-residue polypeptide: Flagellar P-ring protein (365 aa).

The N-terminal stretch at 1-19 (MIKFLSALILLLVTTAAQA) is a signal peptide.

The protein belongs to the FlgI family. The basal body constitutes a major portion of the flagellar organelle and consists of four rings (L,P,S, and M) mounted on a central rod.

It localises to the periplasm. The protein resides in the bacterial flagellum basal body. Functionally, assembles around the rod to form the L-ring and probably protects the motor/basal body from shearing forces during rotation. The protein is Flagellar P-ring protein of Escherichia coli O9:H4 (strain HS).